Reading from the N-terminus, the 207-residue chain is MKFSIIALALAVAFVCVAESRSEEEGYDVSEEIQAEELEEAERGGIDRKLMEVVNNLRKVQGREDSEEAGRGGINRKLMEMVNNLRKVQGREDSEEAGRGGINRKLMEMVNNLRKVQGREDSEEAGRGGINRKLMEMVNNLRKVQGREDSEEAGRGGINRKLMEMVNNLRKVQGREDTEEARGLKDKFKSMGEKLKQYIQTWKAKFG.

Residues 1-22 (MKFSIIALALAVAFVCVAESRS) form the signal peptide. Residues 23–43 (EEEGYDVSEEIQAEELEEAER) constitute a propeptide that is removed on maturation. A Processing quadruplet motif 1 motif is present at residues 40 to 43 (EAER). Gln61 carries the post-translational modification Glutamine amide. An Inverted processing quadruplet motif 1 motif is present at residues 63-66 (REDS). The propeptide occupies 63-71 (REDSEEAGR). The Processing quadruplet motif 2 motif lies at 68-71 (EAGR). Glutamine amide is present on Gln89. An Inverted processing quadruplet motif 2 motif is present at residues 91–94 (REDS). The propeptide occupies 91–99 (REDSEEAGR). The short motif at 96–99 (EAGR) is the Processing quadruplet motif 3 element. Glutamine amide is present on Gln117. The Inverted processing quadruplet motif 3 signature appears at 119–122 (REDS). A propeptide spanning residues 119–127 (REDSEEAGR) is cleaved from the precursor. The Processing quadruplet motif 4 motif lies at 124–127 (EAGR). Gln145 carries the post-translational modification Glutamine amide. The short motif at 147–150 (REDS) is the Inverted processing quadruplet motif 4 element. A propeptide spanning residues 147–155 (REDSEEAGR) is cleaved from the precursor. A Processing quadruplet motif 5 motif is present at residues 152–155 (EAGR). At Gln173 the chain carries Glutamine amide. An Inverted processing quadruplet motif 5 motif is present at residues 175 to 178 (REDT). The propeptide occupies 175–182 (REDTEEAR). A Processing quadruplet motif 6 motif is present at residues 179–182 (EEAR). Residue Phe206 is modified to Phenylalanine amide.

Belongs to the cationic peptide 03 (latarcin) family. 04 subfamily. Post-translationally, cleavage of the propeptide depends on the processing quadruplet motif (PQM) (XXXR, with at least one of X being E) and the inverted PQM (RXXX, with at least one of X being E). Expressed by the venom gland.

It is found in the secreted. In terms of biological role, M-zodatoxin-Lt4a: Has antimicrobial activity against Gram-positive bacteria (A.globiformis VKM Ac-1112 (MIC=0.3 uM), and B.subtilis VKM B-501 (MIC=1.1 uM)), Gram-negative bacteria (E.coli DH5-alpha (MIC=4.5 uM), E.coli MH1 (MIC=3.2 uM), and P.aeruginosa PAO1 (MIC&gt;35 uM)), and yeasts (P.pastoris GS115 (MIC=36 uM), and S.cerevisiae Y190 (MIC=18 uM)). Does not have hemolytic activity against rabbit erythrocytes. Causes paralysis, but is not lethal when injected into insect (M.domestica) larvae. Its function is as follows. Shows no antimicrobial activity against Gram-positive bacterium B.subtilis B-501 or Gram-negative bacterium E.coli DH5-alpha at concentrations up to 20 uM. Shows no antimicrobial activity against Gram-positive bacterium B.subtilis B-501 or Gram-negative bacterium E.coli DH5-alpha at concentrations up to 20 uM. Shows no toxicity towards insect (S.carnaria) larvae. The chain is M-zodatoxin-Lt4a from Lachesana tarabaevi (Spider).